The following is a 151-amino-acid chain: UPF0178 protein CPS_3584 (151 aa).

This sequence belongs to the UPF0178 family.

In Colwellia psychrerythraea (strain 34H / ATCC BAA-681) (Vibrio psychroerythus), this protein is UPF0178 protein CPS_3584.